A 499-amino-acid chain; its full sequence is Glycerol kinase (499 aa).

T13 is a binding site for ADP. 3 residues coordinate ATP: T13, T14, and S15. Sn-glycerol 3-phosphate is bound at residue T13. R17 contributes to the ADP binding site. 4 residues coordinate sn-glycerol 3-phosphate: R83, E84, Y135, and D245. Residues R83, E84, Y135, D245, and Q246 each coordinate glycerol. Residues T267 and G310 each coordinate ADP. 4 residues coordinate ATP: T267, G310, Q314, and G411. Residues G411 and N415 each coordinate ADP.

This sequence belongs to the FGGY kinase family.

It catalyses the reaction glycerol + ATP = sn-glycerol 3-phosphate + ADP + H(+). Its pathway is polyol metabolism; glycerol degradation via glycerol kinase pathway; sn-glycerol 3-phosphate from glycerol: step 1/1. Its activity is regulated as follows. Inhibited by fructose 1,6-bisphosphate (FBP). Key enzyme in the regulation of glycerol uptake and metabolism. Catalyzes the phosphorylation of glycerol to yield sn-glycerol 3-phosphate. The sequence is that of Glycerol kinase from Xanthomonas campestris pv. campestris (strain ATCC 33913 / DSM 3586 / NCPPB 528 / LMG 568 / P 25).